The following is a 454-amino-acid chain: UPF0210 protein EUBREC_1565 (454 aa).

It belongs to the UPF0210 family. Homodimer.

The sequence is that of UPF0210 protein EUBREC_1565 from Agathobacter rectalis (strain ATCC 33656 / DSM 3377 / JCM 17463 / KCTC 5835 / VPI 0990) (Eubacterium rectale).